Here is a 327-residue protein sequence, read N- to C-terminus: Cyclic AMP-responsive element-binding protein 1 (327 aa).

Disordered regions lie at residues 1 to 26 (MTMESGAENQQSGDAAVTEAENQQMT) and 94 to 113 (SEDSQESVDSVTDSQKRREI). Residues 87–146 (QISTIAESEDSQESVDSVTDSQKRREILSRRPSYRKILNDLSSDAPGVPRIEEEKSEEET) form the KID domain. Ser-119 is modified (phosphoserine; by CaMK1, CaMK2, CaMK4, PKB/AKT1 or PKB/AKT2, RPS6KA3, RPS6KA4, RPS6KA5, SGK1 and TSSK4). A Glycyl lysine isopeptide (Lys-Gly) (interchain with G-Cter in SUMO2) cross-link involves residue Lys-122. The disordered stretch occupies residues 125-148 (NDLSSDAPGVPRIEEEKSEEETSA). Phosphoserine is present on Ser-128. Position 257 is a phosphoserine; by HIPK2 (Ser-257). The bZIP domain maps to 269–327 (ARKREVRLMKNREAARECRRKKKEYVKCLENRVAVLENQNKTLIEELKALKDLYCHKSD). The tract at residues 270-295 (RKREVRLMKNREAARECRRKKKEYVK) is basic motif. Glycyl lysine isopeptide (Lys-Gly) (interchain with G-Cter in SUMO1) cross-links involve residues Lys-271 and Lys-290. A leucine-zipper region spans residues 297–318 (LENRVAVLENQNKTLIEELKAL).

Belongs to the bZIP family. As to quaternary structure, interacts with PPRC1. Binds DNA as a dimer. This dimer is stabilized by magnesium ions. Interacts, through the bZIP domain, with the coactivators CRTC1/TORC1, CRTC2/TORC2 and CRTC3/TORC3. When phosphorylated on Ser-119, binds CREBBP. Interacts with CREBL2; regulates CREB1 phosphorylation, stability and transcriptional activity. Interacts (phosphorylated form) with TOX3. Interacts with ARRB1. Binds to HIPK2. Interacts with SGK1. Interacts with TSSK4; this interaction facilitates phosphorylation on Ser-119. Forms a complex with KMT2A and CREBBP. Interacts with TOX4; CREB1 is required for full induction of TOX4-dependent activity and the interaction is increased by cAMP and inhibited by insulin. (Microbial infection) Interacts with hepatitis B virus/HBV protein X. In terms of assembly, (Microbial infection) Interacts with HTLV-1 protein Tax. In terms of processing, stimulated by phosphorylation. Phosphorylation of both Ser-119 and Ser-128 in the SCN regulates the activity of CREB and participates in circadian rhythm generation. Phosphorylation of Ser-119 allows CREBBP binding. In liver, phosphorylation is induced by fasting or glucagon in a circadian fashion. CREBL2 positively regulates phosphorylation at Ser-119 thereby stimulating CREB1 transcriptional activity. Phosphorylated upon calcium influx by CaMK4 and CaMK2 on Ser-119. CaMK4 is much more potent than CaMK2 in activating CREB. Phosphorylated by CaMK2 on Ser-128. Phosphorylation of Ser-128 blocks CREB-mediated transcription even when Ser-119 is phosphorylated. Phosphorylated by CaMK1. Phosphorylation of Ser-257 by HIPK2 in response to genotoxic stress promotes CREB1 activity, facilitating the recruitment of the coactivator CBP. Phosphorylated at Ser-119 by RPS6KA3, RPS6KA4 and RPS6KA5 in response to mitogenic or stress stimuli. Phosphorylated by TSSK4 on Ser-119. Post-translationally, sumoylated with SUMO1. Sumoylation on Lys-290, but not on Lys-271, is required for nuclear localization of this protein. Sumoylation is enhanced under hypoxia, promoting nuclear localization and stabilization.

It is found in the nucleus. Functionally, phosphorylation-dependent transcription factor that stimulates transcription upon binding to the DNA cAMP response element (CRE), a sequence present in many viral and cellular promoters. Transcription activation is enhanced by the TORC coactivators which act independently of Ser-119 phosphorylation. Involved in different cellular processes including the synchronization of circadian rhythmicity and the differentiation of adipose cells. Regulates the expression of apoptotic and inflammatory response factors in cardiomyocytes in response to ERFE-mediated activation of AKT signaling. This chain is Cyclic AMP-responsive element-binding protein 1 (CREB1), found in Homo sapiens (Human).